The following is a 225-amino-acid chain: Protein GrpE (225 aa).

Disordered regions lie at residues methionine 1–glycine 44 and valine 183–glycine 225.

The protein belongs to the GrpE family. In terms of assembly, homodimer.

The protein localises to the cytoplasm. In terms of biological role, participates actively in the response to hyperosmotic and heat shock by preventing the aggregation of stress-denatured proteins, in association with DnaK and GrpE. It is the nucleotide exchange factor for DnaK and may function as a thermosensor. Unfolded proteins bind initially to DnaJ; upon interaction with the DnaJ-bound protein, DnaK hydrolyzes its bound ATP, resulting in the formation of a stable complex. GrpE releases ADP from DnaK; ATP binding to DnaK triggers the release of the substrate protein, thus completing the reaction cycle. Several rounds of ATP-dependent interactions between DnaJ, DnaK and GrpE are required for fully efficient folding. In Streptomyces coelicolor (strain ATCC BAA-471 / A3(2) / M145), this protein is Protein GrpE.